A 282-amino-acid chain; its full sequence is tRNA uridine(34) hydroxylase (282 aa).

In terms of domain architecture, Rhodanese spans 128–222 (DGREVVMLDT…YFEEVGADHY (95 aa)). Residue Cys-182 is the Cysteine persulfide intermediate of the active site.

It belongs to the TrhO family.

It carries out the reaction uridine(34) in tRNA + AH2 + O2 = 5-hydroxyuridine(34) in tRNA + A + H2O. Functionally, catalyzes oxygen-dependent 5-hydroxyuridine (ho5U) modification at position 34 in tRNAs. The protein is tRNA uridine(34) hydroxylase of Ralstonia nicotianae (strain ATCC BAA-1114 / GMI1000) (Ralstonia solanacearum).